Consider the following 875-residue polypeptide: DNA topoisomerase 3-beta (875 aa).

Positions 3–153 constitute a Toprim domain; sequence SVLMVAEKPS…QVTYRAHFSA (151 aa). Residues 170–589 form the Topo IA-type catalytic domain; sequence NENEAKSVDA…AIKIFKLKFM (420 aa). Y332 (O-(5'-phospho-DNA)-tyrosine intermediate) is an active-site residue. Positions 371–391 are disordered; sequence QTPRKGKDAGDHPPITPMKLG.

The protein belongs to the type IA topoisomerase family.

It catalyses the reaction ATP-independent breakage of single-stranded DNA, followed by passage and rejoining.. Releases the supercoiling and torsional tension of DNA introduced during the DNA replication and transcription by transiently cleaving and rejoining one strand of the DNA duplex. Introduces a single-strand break via transesterification at a target site in duplex DNA. The scissile phosphodiester is attacked by the catalytic tyrosine of the enzyme, resulting in the formation of a DNA-(5'-phosphotyrosyl)-enzyme intermediate and the expulsion of a 3'-OH DNA strand. The free DNA strand than undergoes passage around the unbroken strand thus removing DNA supercoils. Finally, in the religation step, the DNA 3'-OH attacks the covalent intermediate to expel the active-site tyrosine and restore the DNA phosphodiester backbone. Weakly relaxes negative supercoils and displays a distinct preference for binding single-stranded DNA. This Drosophila melanogaster (Fruit fly) protein is DNA topoisomerase 3-beta (Top3beta).